The following is a 257-amino-acid chain: Triosephosphate isomerase (257 aa).

A substrate-binding site is contributed by 9-11 (NWK). His95 (electrophile) is an active-site residue. The active-site Proton acceptor is Glu168. Substrate is bound by residues Gly174, Ser213, and 234–235 (GG).

The protein belongs to the triosephosphate isomerase family. Homodimer.

It is found in the cytoplasm. The catalysed reaction is D-glyceraldehyde 3-phosphate = dihydroxyacetone phosphate. The protein operates within carbohydrate biosynthesis; gluconeogenesis. Its pathway is carbohydrate degradation; glycolysis; D-glyceraldehyde 3-phosphate from glycerone phosphate: step 1/1. In terms of biological role, involved in the gluconeogenesis. Catalyzes stereospecifically the conversion of dihydroxyacetone phosphate (DHAP) to D-glyceraldehyde-3-phosphate (G3P). The sequence is that of Triosephosphate isomerase from Acidithiobacillus ferrooxidans (strain ATCC 23270 / DSM 14882 / CIP 104768 / NCIMB 8455) (Ferrobacillus ferrooxidans (strain ATCC 23270)).